The sequence spans 339 residues: Fructose-1,6-bisphosphatase class 1 (339 aa).

The Mg(2+) site is built by glutamate 92, aspartate 114, leucine 116, and aspartate 117. Substrate is bound by residues 117–120 (DGSS), asparagine 209, and lysine 275. Glutamate 281 is a Mg(2+) binding site.

It belongs to the FBPase class 1 family. In terms of assembly, homotetramer. Requires Mg(2+) as cofactor.

Its subcellular location is the cytoplasm. The enzyme catalyses beta-D-fructose 1,6-bisphosphate + H2O = beta-D-fructose 6-phosphate + phosphate. It participates in carbohydrate biosynthesis; gluconeogenesis. This chain is Fructose-1,6-bisphosphatase class 1, found in Acidithiobacillus ferrooxidans (strain ATCC 53993 / BNL-5-31) (Leptospirillum ferrooxidans (ATCC 53993)).